The sequence spans 547 residues: Natural resistance-associated macrophage protein 1 (547 aa).

Residues 1–30 (MTGDKDPQSVSRPNYGSISHPPSSEPQQEP) are disordered. Over 1-54 (MTGDKDPQSVSRPNYGSISHPPSSEPQQEPLRTTYLSEKIPIPDTEPGTFSLRK) the chain is Cytoplasmic. Polar residues predominate over residues 8–17 (QSVSRPNYGS). The span at 21–30 (PPSSEPQQEP) shows a compositional bias: low complexity. The chain crosses the membrane as a helical span at residues 55–75 (LWAFTGPGFLMSIAFLDPGNI). At 76–81 (ESDLQA) the chain is on the extracellular side. A helical transmembrane segment spans residues 82-102 (GAVAGFKLLWVLLWATVLGLL). The Cytoplasmic segment spans residues 103 to 139 (CQRLAARLGVVTGKDLGEICHLYYPKVPRTLLWLTIE). A helical transmembrane segment spans residues 140–160 (LAIVGSDMQEVIGTAIAFSLL). Residues 161-164 (SAGR) are Extracellular-facing. The helical transmembrane segment at 165–185 (IPLWGGVLITIVDTFFFLFLD) threads the bilayer. Residues 186–193 (NYGLRKLE) are Cytoplasmic-facing. The helical transmembrane segment at 194–214 (AFFGILITIMALTFGYEYVVA) threads the bilayer. The Extracellular portion of the chain corresponds to 215–240 (RPAQVALLQGLLLPSCPGCGRPELLQ). Residues 241-261 (AVGIVGAIIMPHNIYLHSALV) traverse the membrane as a helical segment. Residues 262-286 (KSREIDRSRRPDIREANMYFLIEAS) are Cytoplasmic-facing. A helical transmembrane segment spans residues 287 to 307 (IALSVSFFINLFVVAVFGQAF). Topologically, residues 308 to 346 (YQQTNEAAFNVCANSSLHDYAKIFPRNNLTVEVDIYQGG) are extracellular. Residues Asn-321 and Asn-335 are each glycosylated (N-linked (GlcNAc...) asparagine). A helical membrane pass occupies residues 347–367 (VMLGCVFGPAALYIWAVGLLA). The Cytoplasmic portion of the chain corresponds to 368–394 (AGQSSTMTGTYAGQFVMEGFLRLRWSR). Residues 395–415 (FARVLLTRSCAILPTVLVVVF) form a helical membrane-spanning segment. At 416-432 (RDLKDLSGLNDLLNVLQ) the chain is on the extracellular side. A helical membrane pass occupies residues 433 to 453 (SLLLPFAVLPILTFTSMPALM). The Cytoplasmic portion of the chain corresponds to 454–464 (QEFANGRLSKA). A helical transmembrane segment spans residues 465–485 (ITSFIMALVCAINLYFVVIYL). The Extracellular portion of the chain corresponds to 486–492 (PSLPHPA). The helical transmembrane segment at 493–513 (YFILVALLAIVYLGLTTYLVW) threads the bilayer. The Cytoplasmic portion of the chain corresponds to 514–547 (TCFIAHGVTLLAHSSHQHFLYGLPDVEEKGKISG).

This sequence belongs to the NRAMP family.

It localises to the late endosome membrane. It is found in the lysosome membrane. It catalyses the reaction Zn(2+)(in) + H(+)(out) = Zn(2+)(out) + H(+)(in). It carries out the reaction Fe(2+)(in) + H(+)(out) = Fe(2+)(out) + H(+)(in). The catalysed reaction is Mn(2+)(in) + H(+)(out) = Mn(2+)(out) + H(+)(in). Its function is as follows. Macrophage-specific antiporter that fluxes metal ions in either direction against a proton gradient. Localized to late endosomal lysosomal membranes, delivers bivalent cations from the cytosol into these acidic compartments where they may directly affect antimicrobial activity. Involved in iron metabolism and host natural resistance to infection with intracellular parasites. Pathogen resistance involves sequestration of Fe(2+) and Mn(2+), cofactors of both prokaryotic and eukaryotic catalases and superoxide dismutases, not only to protect the macrophage against its own generation of reactive oxygen species, but to deny the cations to the pathogen for synthesis of its protective enzymes. This chain is Natural resistance-associated macrophage protein 1 (SLC11A1), found in Canis lupus familiaris (Dog).